Reading from the N-terminus, the 568-residue chain is Glucose-6-phosphate isomerase, cytosolic 1 (568 aa).

Catalysis depends on Glu-360, which acts as the Proton donor. Active-site residues include His-391 and Lys-516.

The protein belongs to the GPI family. In terms of assembly, homodimer.

It is found in the cytoplasm. The catalysed reaction is alpha-D-glucose 6-phosphate = beta-D-fructose 6-phosphate. Its pathway is carbohydrate degradation; glycolysis; D-glyceraldehyde 3-phosphate and glycerone phosphate from D-glucose: step 2/4. The polypeptide is Glucose-6-phosphate isomerase, cytosolic 1 (PGIC1) (Clarkia arcuata (Glandular clarkia)).